The primary structure comprises 745 residues: Eukaryotic translation initiation factor 3 subunit B (745 aa).

Residues 41–129 (DVIVIEGVPV…HRFSVHRFTD (89 aa)) enclose the RRM domain. WD repeat units lie at residues 189–230 (EHSR…RFMR), 251–293 (WSHE…RSFP), 303–344 (GQLK…LLEK), and 580–625 (GEHY…LQKH). Positions 644–745 (GKDEQKRVRK…IIEETEEVLA (102 aa)) form a coiled coil.

The protein belongs to the eIF-3 subunit B family. As to quaternary structure, component of the eukaryotic translation initiation factor 3 (eIF-3) complex.

The protein resides in the cytoplasm. Functionally, RNA-binding component of the eukaryotic translation initiation factor 3 (eIF-3) complex, which is involved in protein synthesis of a specialized repertoire of mRNAs and, together with other initiation factors, stimulates binding of mRNA and methionyl-tRNAi to the 40S ribosome. The eIF-3 complex specifically targets and initiates translation of a subset of mRNAs involved in cell proliferation. The protein is Eukaryotic translation initiation factor 3 subunit B of Mycosarcoma maydis (Corn smut fungus).